The chain runs to 872 residues: Alanine--tRNA ligase (872 aa).

Histidine 567, histidine 571, cysteine 669, and histidine 673 together coordinate Zn(2+).

This sequence belongs to the class-II aminoacyl-tRNA synthetase family. Zn(2+) serves as cofactor.

Its subcellular location is the cytoplasm. The enzyme catalyses tRNA(Ala) + L-alanine + ATP = L-alanyl-tRNA(Ala) + AMP + diphosphate. Catalyzes the attachment of alanine to tRNA(Ala) in a two-step reaction: alanine is first activated by ATP to form Ala-AMP and then transferred to the acceptor end of tRNA(Ala). Also edits incorrectly charged Ser-tRNA(Ala) and Gly-tRNA(Ala) via its editing domain. The protein is Alanine--tRNA ligase of Streptococcus pyogenes serotype M18 (strain MGAS8232).